Consider the following 260-residue polypeptide: Snake venom serine proteinase 4a (260 aa).

The first 18 residues, 1–18, serve as a signal peptide directing secretion; it reads MVLIRVLANLLILQLSYA. The propeptide occupies 19–24; the sequence is QMSSEL. The 227-residue stretch at 25–251 folds into the Peptidase S1 domain; sequence VTGGDECNRN…HLDWIQRIIA (227 aa). 6 cysteine pairs are disulfide-bonded: C31-C163, C50-C66, C98-C258, C142-C212, C174-C191, and C202-C227. Catalysis depends on H65, which acts as the Charge relay system. N103 is a glycosylation site (N-linked (GlcNAc...) asparagine). Catalysis depends on D110, which acts as the Charge relay system. Residue S206 is the Charge relay system of the active site.

This sequence belongs to the peptidase S1 family. Snake venom subfamily. In terms of assembly, monomer. Expressed by the venom gland.

Its subcellular location is the secreted. In terms of biological role, snake venom serine protease that may act in the hemostasis system of the prey. The protein is Snake venom serine proteinase 4a of Crotalus adamanteus (Eastern diamondback rattlesnake).